The primary structure comprises 221 residues: 3-isopropylmalate dehydratase small subunit (221 aa).

This sequence belongs to the LeuD family. LeuD type 1 subfamily. Heterodimer of LeuC and LeuD.

The catalysed reaction is (2R,3S)-3-isopropylmalate = (2S)-2-isopropylmalate. Its pathway is amino-acid biosynthesis; L-leucine biosynthesis; L-leucine from 3-methyl-2-oxobutanoate: step 2/4. Functionally, catalyzes the isomerization between 2-isopropylmalate and 3-isopropylmalate, via the formation of 2-isopropylmaleate. In Nitrosomonas europaea (strain ATCC 19718 / CIP 103999 / KCTC 2705 / NBRC 14298), this protein is 3-isopropylmalate dehydratase small subunit.